The chain runs to 370 residues: Mitogen-activated protein kinase 3 (370 aa).

The Protein kinase domain maps to 32 to 319 (YVPIKPIGRG…VTEALEHPYM (288 aa)). ATP is bound by residues 38 to 46 (IGRGAYGIV) and Lys61. Asp158 (proton acceptor) is an active-site residue. Thr191 carries the post-translational modification Phosphothreonine. Residues 191–193 (TEY) carry the TXY motif. A Phosphotyrosine modification is found at Tyr193.

This sequence belongs to the protein kinase superfamily. CMGC Ser/Thr protein kinase family. MAP kinase subfamily. Dually phosphorylated on Thr-191 and Tyr-193, which activates the enzyme.

The enzyme catalyses L-seryl-[protein] + ATP = O-phospho-L-seryl-[protein] + ADP + H(+). The catalysed reaction is L-threonyl-[protein] + ATP = O-phospho-L-threonyl-[protein] + ADP + H(+). Activated by threonine and tyrosine phosphorylation. In Oryza sativa subsp. japonica (Rice), this protein is Mitogen-activated protein kinase 3 (MPK3).